Here is a 336-residue protein sequence, read N- to C-terminus: Glycerol-3-phosphate dehydrogenase [NAD(P)+] (336 aa).

The NADPH site is built by Ser16, Tyr17, His37, and Lys111. 3 residues coordinate sn-glycerol 3-phosphate: Lys111, Gly140, and Thr142. Ala144 serves as a coordination point for NADPH. Residues Lys196, Asp249, Ser259, Arg260, and Asn261 each coordinate sn-glycerol 3-phosphate. Lys196 functions as the Proton acceptor in the catalytic mechanism. Position 260 (Arg260) interacts with NADPH. NADPH-binding residues include Val284 and Glu286.

Belongs to the NAD-dependent glycerol-3-phosphate dehydrogenase family.

Its subcellular location is the cytoplasm. The catalysed reaction is sn-glycerol 3-phosphate + NAD(+) = dihydroxyacetone phosphate + NADH + H(+). The enzyme catalyses sn-glycerol 3-phosphate + NADP(+) = dihydroxyacetone phosphate + NADPH + H(+). It functions in the pathway membrane lipid metabolism; glycerophospholipid metabolism. Functionally, catalyzes the reduction of the glycolytic intermediate dihydroxyacetone phosphate (DHAP) to sn-glycerol 3-phosphate (G3P), the key precursor for phospholipid synthesis. The sequence is that of Glycerol-3-phosphate dehydrogenase [NAD(P)+] from Actinobacillus pleuropneumoniae serotype 5b (strain L20).